We begin with the raw amino-acid sequence, 122 residues long: Large ribosomal subunit protein uL14 (122 aa).

The protein belongs to the universal ribosomal protein uL14 family. In terms of assembly, part of the 50S ribosomal subunit. Forms a cluster with proteins L3 and L19. In the 70S ribosome, L14 and L19 interact and together make contacts with the 16S rRNA in bridges B5 and B8.

Functionally, binds to 23S rRNA. Forms part of two intersubunit bridges in the 70S ribosome. This is Large ribosomal subunit protein uL14 from Desulfitobacterium hafniense (strain DSM 10664 / DCB-2).